The sequence spans 445 residues: MGKKIVILGGGESGIGTAILAKKNGYDVFLSDKGKIKDKYKEVLKHIEIEWEDEKHTESKIFDADVVMKSPGIPDKAPMIVKLKEKGISVVSEIEFASWFSEVPVIGITGSNGKTTVTNLVQHLLKEGGINSGMGGNIGNSYAKMVAEEMHDWFVLELSSFQLDGIEKFKPHIAILTNITPDHLDRYDYKLENYIASKFRIAENQTEEDYFIYDADDKNITDWLEKNPVRSQKLPFSIEKKIENGAYIENENIVVTINNTKFTMPTSELALQGKHNAKNAMAASMVSQLLRIRKQTIRESMASFQGVEHRLEKVLKINNVLYINDSKATNVNATFYALESMESETVWILGGVDKGNVYDDLLPLVNEKVKAIICLGVDNEKIVSAFGNIVDTMVETTSMSEAVQMAYRLSDKGDNVLLSPACASFDLFENYEDRGRQFKEAVRNL.

ATP is bound at residue 110 to 116 (GSNGKTT).

The protein belongs to the MurCDEF family.

It localises to the cytoplasm. It carries out the reaction UDP-N-acetyl-alpha-D-muramoyl-L-alanine + D-glutamate + ATP = UDP-N-acetyl-alpha-D-muramoyl-L-alanyl-D-glutamate + ADP + phosphate + H(+). Its pathway is cell wall biogenesis; peptidoglycan biosynthesis. Its function is as follows. Cell wall formation. Catalyzes the addition of glutamate to the nucleotide precursor UDP-N-acetylmuramoyl-L-alanine (UMA). This is UDP-N-acetylmuramoylalanine--D-glutamate ligase from Christiangramia forsetii (strain DSM 17595 / CGMCC 1.15422 / KT0803) (Gramella forsetii).